We begin with the raw amino-acid sequence, 315 residues long: Protein LST8 homolog (315 aa).

WD repeat units follow at residues 1–31 (MGDQ…KTMR), 33–71 (VETS…TAPV), 76–115 (GVQK…PHCS), 119–158 (DCES…HECI), 161–200 (EVDA…DQKM), 211–250 (AHTR…KWRE), 253–292 (IENY…PTRE), and 295–315 (GHTK…KVNH).

It belongs to the WD repeat LST8 family.

It localises to the cytoplasm. The sequence is that of Protein LST8 homolog from Drosophila pseudoobscura pseudoobscura (Fruit fly).